We begin with the raw amino-acid sequence, 347 residues long: Bifunctional methylenetetrahydrofolate dehydrogenase/cyclohydrolase 2, mitochondrial (347 aa).

Residues 98 to 102 (YVRNK) and 145 to 147 (VQL) each bind substrate. NAD(+) contacts are provided by residues 214 to 216 (GRS) and Arg-247. 323 to 327 (PGGVG) contacts substrate.

Belongs to the tetrahydrofolate dehydrogenase/cyclohydrolase family. The cofactor is Mg(2+).

It is found in the mitochondrion inner membrane. It carries out the reaction (6R)-5,10-methylene-5,6,7,8-tetrahydrofolate + NAD(+) = (6R)-5,10-methenyltetrahydrofolate + NADH. The enzyme catalyses (6R)-5,10-methenyltetrahydrofolate + H2O = (6R)-10-formyltetrahydrofolate + H(+). It catalyses the reaction (6R)-5,10-methylene-5,6,7,8-tetrahydrofolate + NADP(+) = (6R)-5,10-methenyltetrahydrofolate + NADPH. It functions in the pathway one-carbon metabolism; tetrahydrofolate interconversion. Bifunctional mitochondrial folate-interconverting enzyme that has both NAD/NADP-dependent methylenetetrahydrofolate dehydrogenase and methenyltetrahydrofolate cyclohydrolase activities. This Callithrix jacchus (White-tufted-ear marmoset) protein is Bifunctional methylenetetrahydrofolate dehydrogenase/cyclohydrolase 2, mitochondrial.